The following is a 458-amino-acid chain: Argininosuccinate lyase (458 aa).

This sequence belongs to the lyase 1 family. Argininosuccinate lyase subfamily.

Its subcellular location is the cytoplasm. The enzyme catalyses 2-(N(omega)-L-arginino)succinate = fumarate + L-arginine. It functions in the pathway amino-acid biosynthesis; L-arginine biosynthesis; L-arginine from L-ornithine and carbamoyl phosphate: step 3/3. The protein is Argininosuccinate lyase of Lachnospira eligens (strain ATCC 27750 / DSM 3376 / VPI C15-48 / C15-B4) (Eubacterium eligens).